We begin with the raw amino-acid sequence, 398 residues long: Cytochrome b (398 aa).

A run of 4 helical transmembrane segments spans residues 33–53 (FGSL…FLAM), 77–98 (WLIR…YLHI), 113–133 (WNIG…GYVL), and 178–198 (FFAF…IHLL). Heme b is bound by residues H83 and H97. Residues H182 and H196 each coordinate heme b. Residue H201 participates in a ubiquinone binding. A run of 4 helical transmembrane segments spans residues 226-246 (YKDL…SLFA), 288-308 (LGGV…PILH), 320-340 (FTQL…WIGG), and 347-367 (YVVI…FLIP).

The protein belongs to the cytochrome b family. In terms of assembly, the cytochrome bc1 complex contains 3 respiratory subunits (MT-CYB, CYC1 and UQCRFS1), 2 core proteins (UQCRC1 and UQCRC2) and probably 6 low-molecular weight proteins. Heme b serves as cofactor.

The protein localises to the mitochondrion inner membrane. Component of the ubiquinol-cytochrome c reductase complex (complex III or cytochrome b-c1 complex) that is part of the mitochondrial respiratory chain. The b-c1 complex mediates electron transfer from ubiquinol to cytochrome c. Contributes to the generation of a proton gradient across the mitochondrial membrane that is then used for ATP synthesis. This is Cytochrome b (mt-cyb) from Channa asiatica (Small snakehead).